Here is a 405-residue protein sequence, read N- to C-terminus: Argininosuccinate synthase (405 aa).

ATP is bound by residues 10–18 and A37; that span reads AYSGGLDTS. Residues Y88 and S93 each contribute to the L-citrulline site. G118 contributes to the ATP binding site. T120, N124, and D125 together coordinate L-aspartate. N124 serves as a coordination point for L-citrulline. R128, S177, S186, E263, and Y275 together coordinate L-citrulline.

Belongs to the argininosuccinate synthase family. Type 1 subfamily. Homotetramer.

It localises to the cytoplasm. It catalyses the reaction L-citrulline + L-aspartate + ATP = 2-(N(omega)-L-arginino)succinate + AMP + diphosphate + H(+). Its pathway is amino-acid biosynthesis; L-arginine biosynthesis; L-arginine from L-ornithine and carbamoyl phosphate: step 2/3. The protein is Argininosuccinate synthase of Acetivibrio thermocellus (strain ATCC 27405 / DSM 1237 / JCM 9322 / NBRC 103400 / NCIMB 10682 / NRRL B-4536 / VPI 7372) (Clostridium thermocellum).